Consider the following 240-residue polypeptide: Ribose-5-phosphate isomerase (240 aa).

Residues 34-37 (SGST), 88-91 (DGAD), and 101-104 (KGGG) contribute to the substrate site. Catalysis depends on E110, which acts as the Proton acceptor. Substrate is bound at residue K128.

It belongs to the ribose 5-phosphate isomerase family.

Its subcellular location is the cytoplasm. It catalyses the reaction aldehydo-D-ribose 5-phosphate = D-ribulose 5-phosphate. The protein operates within carbohydrate degradation; pentose phosphate pathway; D-ribose 5-phosphate from D-ribulose 5-phosphate (non-oxidative stage): step 1/1. In terms of biological role, involved in the first step of the non-oxidative branch of the pentose phosphate pathway. It catalyzes the reversible conversion of ribose-5-phosphate to ribulose 5-phosphate. This is Ribose-5-phosphate isomerase (RKI1) from Candida albicans (strain SC5314 / ATCC MYA-2876) (Yeast).